A 198-amino-acid polypeptide reads, in one-letter code: Charged multivesicular body protein 1a (198 aa).

Coiled coils occupy residues 7-41 and 176-198; these read QLKF…QQKN and GETS…ALRN. The tract at residues 171-198 is disordered; the sequence is GASALGETSARAQEKEDQLSRRLAALRN. An MIT-interacting motif motif is present at residues 187 to 197; that stretch reads DQLSRRLAALR.

It belongs to the SNF7 family. Probable peripherally associated component of the endosomal sorting required for transport complex III (ESCRT-III).

It localises to the cytoplasm. The protein resides in the endosome membrane. Functionally, probable peripherally associated component of the endosomal sorting required for transport complex III (ESCRT-III) which is involved in multivesicular bodies (MVBs) formation and sorting of endosomal cargo proteins into MVBs. MVBs contain intraluminal vesicles (ILVs) that are generated by invagination and scission from the limiting membrane of the endosome and mostly are delivered to lysosomes enabling degradation of membrane proteins, such as stimulated growth factor receptors, lysosomal enzymes and lipids. In Danio rerio (Zebrafish), this protein is Charged multivesicular body protein 1a (chmp1a).